Reading from the N-terminus, the 485-residue chain is Glucagon receptor (485 aa).

An N-terminal signal peptide occupies residues 1-26 (MLLTQLHCPYLLLLLVVLSCLPKAPS). At 27-137 (AQVMDFLFEK…EIEVQKGVAK (111 aa)) the chain is on the extracellular side. 3 disulfide bridges follow: C44-C68, C59-C101, and C82-C122. 4 N-linked (GlcNAc...) asparagine glycosylation sites follow: N47, N60, N75, and N79. A helical membrane pass occupies residues 138–162 (MYSSYQVMYTVGYSLSLGALLLALV). Residues 163-174 (ILLGLRKLHCTR) lie on the Cytoplasmic side of the membrane. The helical transmembrane segment at 175–199 (NYIHGNLFASFVLKAGSVLVIDWLL) threads the bilayer. Topologically, residues 200–226 (KTRYSQKIGDDLSVSVWLSDGAVAGCR) are extracellular. C225 and C295 are joined by a disulfide. The chain crosses the membrane as a helical span at residues 227–250 (VATVIMQYGIIANYCWLLVEGVYL). Topologically, residues 251 to 264 (YSLLSITTFSEKSF) are cytoplasmic. A helical transmembrane segment spans residues 265-286 (FSLYLCIGWGSPLLFVIPWVVV). Residues 287–304 (KCLFENVQCWTSNDNMGF) lie on the Extracellular side of the membrane. A helical transmembrane segment spans residues 305–327 (WWILRIPVLLAILINFFIFVRII). The Cytoplasmic portion of the chain corresponds to 328-351 (HLLVAKLRAHQMHYADYKFRLARS). An important for allosteric inhibitor binding region spans residues 351–354 (STLT). The chain crosses the membrane as a helical span at residues 352–370 (TLTLIPLLGVHEVVFAFVT). The Extracellular segment spans residues 371-382 (DEHAQGTLRSTK). A helical membrane pass occupies residues 383–403 (LFFDLFFSSFQGLLVAVLYCF). At 404–485 (LNKEVQAELL…SLPRLADSPT (82 aa)) the chain is on the cytoplasmic side. Residues 455 to 485 (MSAGSSSGTGCEPSAKTSLASSLPRLADSPT) form a disordered region. The span at 456-475 (SAGSSSGTGCEPSAKTSLAS) shows a compositional bias: polar residues. A phosphoserine mark is found at S460 and S476.

Belongs to the G-protein coupled receptor 2 family. Ligand-binding promotes phosphorylation of serine residues in the C-terminal cytoplasmic domain. Phosphorylation is important for receptor endocytosis after ligand-binding.

It localises to the cell membrane. G-protein coupled receptor for glucagon that plays a central role in the regulation of blood glucose levels and glucose homeostasis. Regulates the rate of hepatic glucose production by promoting glycogen hydrolysis and gluconeogenesis. Plays an important role in mediating the responses to fasting. Ligand binding causes a conformation change that triggers signaling via guanine nucleotide-binding proteins (G proteins) and modulates the activity of down-stream effectors, such as adenylate cyclase. Promotes activation of adenylate cyclase. Besides, plays a role in signaling via a phosphatidylinositol-calcium second messenger system. In Rattus norvegicus (Rat), this protein is Glucagon receptor (Gcgr).